Reading from the N-terminus, the 256-residue chain is Ribonuclease HII (256 aa).

In terms of domain architecture, RNase H type-2 spans 72–256 (ALICGIDEVG…TFEPIKSLVN (185 aa)). Residues Asp-78, Glu-79, and Asp-170 each contribute to the a divalent metal cation site.

Belongs to the RNase HII family. Requires Mn(2+) as cofactor. Mg(2+) is required as a cofactor.

Its subcellular location is the cytoplasm. The catalysed reaction is Endonucleolytic cleavage to 5'-phosphomonoester.. In terms of biological role, endonuclease that specifically degrades the RNA of RNA-DNA hybrids. This chain is Ribonuclease HII, found in Staphylococcus saprophyticus subsp. saprophyticus (strain ATCC 15305 / DSM 20229 / NCIMB 8711 / NCTC 7292 / S-41).